The following is an 887-amino-acid chain: DNA gyrase subunit A (887 aa).

The Topo IIA-type catalytic domain maps to 35–501 (LPDVRDGLKP…GFENLEDEDL (467 aa)). Tyr-123 acts as the O-(5'-phospho-DNA)-tyrosine intermediate in catalysis. The GyrA-box motif lies at 528 to 534 (QNRGGRG). The interval 811 to 864 (KEDAEDETNEDEQSTSTVSEDGTEQQREAVVNDETPGNAIHTEVIDSEENDEDG) is disordered. Residues 813-823 (DAEDETNEDEQ) are compositionally biased toward acidic residues.

Belongs to the type II topoisomerase GyrA/ParC subunit family. As to quaternary structure, heterotetramer, composed of two GyrA and two GyrB chains. In the heterotetramer, GyrA contains the active site tyrosine that forms a transient covalent intermediate with DNA, while GyrB binds cofactors and catalyzes ATP hydrolysis.

Its subcellular location is the cytoplasm. The catalysed reaction is ATP-dependent breakage, passage and rejoining of double-stranded DNA.. In terms of biological role, a type II topoisomerase that negatively supercoils closed circular double-stranded (ds) DNA in an ATP-dependent manner to modulate DNA topology and maintain chromosomes in an underwound state. Negative supercoiling favors strand separation, and DNA replication, transcription, recombination and repair, all of which involve strand separation. Also able to catalyze the interconversion of other topological isomers of dsDNA rings, including catenanes and knotted rings. Type II topoisomerases break and join 2 DNA strands simultaneously in an ATP-dependent manner. The chain is DNA gyrase subunit A from Staphylococcus aureus (strain COL).